Here is a 264-residue protein sequence, read N- to C-terminus: Proteasome assembly chaperone 2 (264 aa).

Threonine 137 carries the post-translational modification Phosphothreonine.

Belongs to the PSMG2 family. In terms of assembly, forms a heterodimer with PSMG1. The PSMG1-PSMG2 heterodimer interacts directly with the PSMA5 and PSMA7 proteasome alpha subunits. Degraded by the proteasome upon completion of 20S proteasome maturation. In terms of tissue distribution, widely expressed with highest levels in lung, brain and colon. Moderately expressed in muscle, stomach, spleen and heart. Weakly expressed in small intestine, pancreas and liver. Highly expressed in hepatocellular carcinomas with low levels in surrounding liver tissue.

Its subcellular location is the nucleus. Functionally, chaperone protein which promotes assembly of the 20S proteasome as part of a heterodimer with PSMG1. The PSMG1-PSMG2 heterodimer binds to the PSMA5 and PSMA7 proteasome subunits, promotes assembly of the proteasome alpha subunits into the heteroheptameric alpha ring and prevents alpha ring dimerization. The polypeptide is Proteasome assembly chaperone 2 (Homo sapiens (Human)).